The chain runs to 351 residues: Biotin synthase (351 aa).

The 219-residue stretch at 44 to 262 folds into the Radical SAM core domain; that stretch reads NRVQVSTLLS…LAVARILMPQ (219 aa). The [4Fe-4S] cluster site is built by Cys-59, Cys-63, and Cys-66. Cys-103, Cys-134, Cys-194, and Arg-266 together coordinate [2Fe-2S] cluster.

The protein belongs to the radical SAM superfamily. Biotin synthase family. Homodimer. Requires [4Fe-4S] cluster as cofactor. It depends on [2Fe-2S] cluster as a cofactor.

It carries out the reaction (4R,5S)-dethiobiotin + (sulfur carrier)-SH + 2 reduced [2Fe-2S]-[ferredoxin] + 2 S-adenosyl-L-methionine = (sulfur carrier)-H + biotin + 2 5'-deoxyadenosine + 2 L-methionine + 2 oxidized [2Fe-2S]-[ferredoxin]. It functions in the pathway cofactor biosynthesis; biotin biosynthesis; biotin from 7,8-diaminononanoate: step 2/2. In terms of biological role, catalyzes the conversion of dethiobiotin (DTB) to biotin by the insertion of a sulfur atom into dethiobiotin via a radical-based mechanism. This chain is Biotin synthase, found in Pseudomonas fluorescens (strain ATCC BAA-477 / NRRL B-23932 / Pf-5).